The following is a 424-amino-acid chain: MAIEQMTMPQLGESVTEGTISKWLVAPGDKVNKYDPIAEVMTDKVNAEVPSSFTGTITELVGEEGQTLQVGEMICKIETEGANPAEQKQEQPAASEAAENPVAKSAGAADQPNKKRYSPAVLRLAGEHGIDLDQVTGTGAGGRITRKDIQRLIETGGVQEQNPEELKTAAPAPKSASKPEPKEETSYPASAAGDKEIPVTGVRKAIASNMKRSKTEIPHAWTMMEVDVTNMVAYRNSIKDSFKKTEGFNLTFFAFFVKAVAQALKEFPQMNSMWAGDKIIQKKDINISIAVATEDSLFVPVIKNADEKTIKGIAKDITGLAKKVRDGKLTADDMQGGTFTVNNTGSFGSVQSMGIINYPQAAILQVESIVKRPVVMDNGMIAVRDMVNLCLSLDHRVLDGLVCGRFLGRVKQILESIDEKTSVY.

Positions isoleucine 3–glutamate 78 constitute a Lipoyl-binding domain. Position 44 is an N6-lipoyllysine (lysine 44). The tract at residues alanine 82–lysine 115 is disordered. One can recognise a Peripheral subunit-binding (PSBD) domain in the interval arginine 116–isoleucine 153. A disordered region spans residues glutamate 154–glycine 193. Catalysis depends on residues histidine 395 and aspartate 399.

It belongs to the 2-oxoacid dehydrogenase family. Forms a 24-polypeptide structural core with octahedral symmetry. (R)-lipoate serves as cofactor.

The enzyme catalyses N(6)-[(R)-dihydrolipoyl]-L-lysyl-[protein] + 2-methylpropanoyl-CoA = N(6)-[(R)-S(8)-2-methylpropanoyldihydrolipoyl]-L-lysyl-[protein] + CoA. Its function is as follows. The branched-chain alpha-keto dehydrogenase complex catalyzes the overall conversion of alpha-keto acids to acyl-CoA and CO(2). It contains multiple copies of three enzymatic components: branched-chain alpha-keto acid decarboxylase (E1), lipoamide acyltransferase (E2) and lipoamide dehydrogenase (E3). This is Lipoamide acyltransferase component of branched-chain alpha-keto acid dehydrogenase complex (bfmBB) from Bacillus subtilis (strain 168).